Reading from the N-terminus, the 256-residue chain is Probable succinate transporter subunit YjjP (256 aa).

At 1 to 113 (MQTEQQRAVT…KRFSQIQPLR (113 aa)) the chain is on the cytoplasmic side. The helical transmembrane segment at 114–135 (YPRWLVALMVGLSCACFCKLNN) threads the bilayer. Topologically, residues 136-140 (GGWDG) are periplasmic. The chain crosses the membrane as a helical span at residues 141-158 (AVITFFASTTAMYIRQLL). The Cytoplasmic segment spans residues 159-168 (AQRHLHPQIN). Residues 169–189 (FCLTAFAATTISGLLLQLPTF) traverse the membrane as a helical segment. At 190 to 194 (SNTPT) the chain is on the periplasmic side. Residues 195 to 215 (IAMAASVLLLVPGFPLINAVA) form a helical membrane-spanning segment. The Cytoplasmic segment spans residues 216–228 (DMFKGHINTGLAR). Residues 229 to 249 (WAIASLLTLATCVGVVMALTI) traverse the membrane as a helical segment. Topologically, residues 250-256 (WGLRGWV) are periplasmic.

Belongs to the ThrE exporter (TC 2.A.79) family. The transporter is composed of YjjB and YjjP.

Its subcellular location is the cell inner membrane. Its function is as follows. Involved in succinate export with YjjB. Both proteins are required for export. Contributes to succinate production under both aerobic and anaerobic conditions. In Escherichia coli (strain K12), this protein is Probable succinate transporter subunit YjjP (yjjP).